The primary structure comprises 341 residues: Phosphoribosylformylglycinamidine cyclo-ligase (341 aa).

It belongs to the AIR synthase family.

It is found in the cytoplasm. The catalysed reaction is 2-formamido-N(1)-(5-O-phospho-beta-D-ribosyl)acetamidine + ATP = 5-amino-1-(5-phospho-beta-D-ribosyl)imidazole + ADP + phosphate + H(+). It participates in purine metabolism; IMP biosynthesis via de novo pathway; 5-amino-1-(5-phospho-D-ribosyl)imidazole from N(2)-formyl-N(1)-(5-phospho-D-ribosyl)glycinamide: step 2/2. This Xanthomonas axonopodis pv. citri (strain 306) protein is Phosphoribosylformylglycinamidine cyclo-ligase.